We begin with the raw amino-acid sequence, 632 residues long: 1,4-alpha-glucan branching enzyme GlgB (632 aa).

Aspartate 310 functions as the Nucleophile in the catalytic mechanism. Glutamate 363 functions as the Proton donor in the catalytic mechanism.

It belongs to the glycosyl hydrolase 13 family. GlgB subfamily. Monomer.

It catalyses the reaction Transfers a segment of a (1-&gt;4)-alpha-D-glucan chain to a primary hydroxy group in a similar glucan chain.. It participates in glycan biosynthesis; glycogen biosynthesis. Catalyzes the formation of the alpha-1,6-glucosidic linkages in glycogen by scission of a 1,4-alpha-linked oligosaccharide from growing alpha-1,4-glucan chains and the subsequent attachment of the oligosaccharide to the alpha-1,6 position. The polypeptide is 1,4-alpha-glucan branching enzyme GlgB (Desulfitobacterium hafniense (strain Y51)).